The primary structure comprises 444 residues: Proline--tRNA ligase (444 aa).

It belongs to the class-II aminoacyl-tRNA synthetase family. ProS type 2 subfamily. In terms of assembly, homodimer.

It localises to the cytoplasm. The enzyme catalyses tRNA(Pro) + L-proline + ATP = L-prolyl-tRNA(Pro) + AMP + diphosphate. Catalyzes the attachment of proline to tRNA(Pro) in a two-step reaction: proline is first activated by ATP to form Pro-AMP and then transferred to the acceptor end of tRNA(Pro). This is Proline--tRNA ligase from Bradyrhizobium sp. (strain BTAi1 / ATCC BAA-1182).